Reading from the N-terminus, the 367-residue chain is Undecaprenyl-phosphate alpha-N-acetylglucosaminyl 1-phosphate transferase (367 aa).

9 helical membrane passes run 3–23 (LLTALSELISIFLFTTIFIFL), 45–65 (GVIPLVGGISVFAGICFMFGL), 69–89 (YIPHLSLYLICAGVLVFVGAM), 129–149 (WELVLGPFGYFLTLFAVWAAI), 158–178 (IDGLLGGLSSVSFAAMGLILW), 187–207 (MWCFAMIAAILPYIMLNLGIL), 213–233 (VFMGDAGSTLIGFTVIWLLLE), 242–262 (ISPVTALWIIAIPLMDMVAIM), and 318–338 (VPEWVMLVLFLLAFFLYGYCI).

It belongs to the glycosyltransferase 4 family. WecA subfamily. Mg(2+) is required as a cofactor. Mn(2+) serves as cofactor.

The protein localises to the cell inner membrane. The enzyme catalyses di-trans,octa-cis-undecaprenyl phosphate + UDP-N-acetyl-alpha-D-glucosamine = N-acetyl-alpha-D-glucosaminyl-di-trans,octa-cis-undecaprenyl diphosphate + UMP. Its pathway is bacterial outer membrane biogenesis; LPS O-antigen biosynthesis. It participates in bacterial outer membrane biogenesis; enterobacterial common antigen biosynthesis. Inhibited by tunicamycin. In terms of biological role, catalyzes the transfer of the GlcNAc-1-phosphate moiety from UDP-GlcNAc onto the carrier lipid undecaprenyl phosphate (C55-P), yielding GlcNAc-pyrophosphoryl-undecaprenyl (GlcNAc-PP-C55). The protein is Undecaprenyl-phosphate alpha-N-acetylglucosaminyl 1-phosphate transferase of Salmonella typhimurium (strain LT2 / SGSC1412 / ATCC 700720).